The chain runs to 51 residues: Ribosome biogenesis protein Nop10 (51 aa).

It belongs to the NOP10 family.

In terms of biological role, involved in ribosome biogenesis; more specifically in 18S rRNA pseudouridylation and in cleavage of pre-rRNA. The polypeptide is Ribosome biogenesis protein Nop10 (Methanococcus aeolicus (strain ATCC BAA-1280 / DSM 17508 / OCM 812 / Nankai-3)).